Consider the following 317-residue polypeptide: MKILLANPRGFCAGVDRAISIVERALELYQPPIYVRHEVVHNRFVVEGLKQRGAIFVEELHEVPDNNIVIFSAHGVSQAVRQEAKQRDLTVFDATCPLVTKVHMEVARASRRNMEVVLIGHAGHPEVEGTMGQYSSETGGMYLVETPADVEKLKAIVKDPSDLHYVSQTTLSVDETADVIEELRRVFPDIQGPRKDDICYATQNRQDAVRELAGDVDVMVVVGSKNSSNSTRLKELAEKLGTPGYLTDCPEDIKPEWFEGKTKVGVTAGASAPEELVNQILERIKELVGARSVDEVLGREENMFFEVPKELQIKQVD.

Cysteine 12 provides a ligand contact to [4Fe-4S] cluster. Positions 41 and 74 each coordinate (2E)-4-hydroxy-3-methylbut-2-enyl diphosphate. Residues histidine 41 and histidine 74 each coordinate dimethylallyl diphosphate. Isopentenyl diphosphate-binding residues include histidine 41 and histidine 74. [4Fe-4S] cluster is bound at residue cysteine 96. Histidine 124 contacts (2E)-4-hydroxy-3-methylbut-2-enyl diphosphate. Histidine 124 serves as a coordination point for dimethylallyl diphosphate. Histidine 124 is a binding site for isopentenyl diphosphate. Catalysis depends on glutamate 126, which acts as the Proton donor. Threonine 169 contacts (2E)-4-hydroxy-3-methylbut-2-enyl diphosphate. Cysteine 199 contributes to the [4Fe-4S] cluster binding site. Residues serine 227, serine 228, asparagine 229, and serine 271 each coordinate (2E)-4-hydroxy-3-methylbut-2-enyl diphosphate. The dimethylallyl diphosphate site is built by serine 227, serine 228, asparagine 229, and serine 271. Residues serine 227, serine 228, asparagine 229, and serine 271 each contribute to the isopentenyl diphosphate site.

The protein belongs to the IspH family. The cofactor is [4Fe-4S] cluster.

It carries out the reaction isopentenyl diphosphate + 2 oxidized [2Fe-2S]-[ferredoxin] + H2O = (2E)-4-hydroxy-3-methylbut-2-enyl diphosphate + 2 reduced [2Fe-2S]-[ferredoxin] + 2 H(+). It catalyses the reaction dimethylallyl diphosphate + 2 oxidized [2Fe-2S]-[ferredoxin] + H2O = (2E)-4-hydroxy-3-methylbut-2-enyl diphosphate + 2 reduced [2Fe-2S]-[ferredoxin] + 2 H(+). Its pathway is isoprenoid biosynthesis; dimethylallyl diphosphate biosynthesis; dimethylallyl diphosphate from (2E)-4-hydroxy-3-methylbutenyl diphosphate: step 1/1. It participates in isoprenoid biosynthesis; isopentenyl diphosphate biosynthesis via DXP pathway; isopentenyl diphosphate from 1-deoxy-D-xylulose 5-phosphate: step 6/6. In terms of biological role, catalyzes the conversion of 1-hydroxy-2-methyl-2-(E)-butenyl 4-diphosphate (HMBPP) into a mixture of isopentenyl diphosphate (IPP) and dimethylallyl diphosphate (DMAPP). Acts in the terminal step of the DOXP/MEP pathway for isoprenoid precursor biosynthesis. This chain is 4-hydroxy-3-methylbut-2-enyl diphosphate reductase, found in Vibrio parahaemolyticus serotype O3:K6 (strain RIMD 2210633).